A 66-amino-acid polypeptide reads, in one-letter code: Large ribosomal subunit protein bL31 (66 aa).

Zn(2+)-binding residues include Cys-16, Cys-18, Cys-36, and Cys-39.

It belongs to the bacterial ribosomal protein bL31 family. Type A subfamily. As to quaternary structure, part of the 50S ribosomal subunit during exponential growth. Requires Zn(2+) as cofactor.

Its function is as follows. Binds the 23S rRNA. Functionally, while neither of the L31 paralogs is essential, this protein seems to function as the main L31 protein. Has a lower affinity for 70S ribosomes than the non-zinc-containing paralog L31B (ytiA); is displaced by it to varying extents, even under zinc-replete conditions. The polypeptide is Large ribosomal subunit protein bL31 (rpmE) (Bacillus subtilis (strain 168)).